We begin with the raw amino-acid sequence, 606 residues long: tRNA 5-methylaminomethyl-2-thiouridine biosynthesis bifunctional protein MnmC (606 aa).

Residues 1-237 (MNSNSSVQFN…KRDMLCGHYL (237 aa)) form a tRNA (mnm(5)s(2)U34)-methyltransferase region. The tract at residues 254–606 (IGGGISAACS…RRISVSRFKG (353 aa)) is FAD-dependent cmnm(5)s(2)U34 oxidoreductase.

It in the N-terminal section; belongs to the methyltransferase superfamily. tRNA (mnm(5)s(2)U34)-methyltransferase family. This sequence in the C-terminal section; belongs to the DAO family. The cofactor is FAD.

It localises to the cytoplasm. It carries out the reaction 5-aminomethyl-2-thiouridine(34) in tRNA + S-adenosyl-L-methionine = 5-methylaminomethyl-2-thiouridine(34) in tRNA + S-adenosyl-L-homocysteine + H(+). Catalyzes the last two steps in the biosynthesis of 5-methylaminomethyl-2-thiouridine (mnm(5)s(2)U) at the wobble position (U34) in tRNA. Catalyzes the FAD-dependent demodification of cmnm(5)s(2)U34 to nm(5)s(2)U34, followed by the transfer of a methyl group from S-adenosyl-L-methionine to nm(5)s(2)U34, to form mnm(5)s(2)U34. The protein is tRNA 5-methylaminomethyl-2-thiouridine biosynthesis bifunctional protein MnmC of Idiomarina loihiensis (strain ATCC BAA-735 / DSM 15497 / L2-TR).